Reading from the N-terminus, the 249-residue chain is Adenosylcobinamide-GDP ribazoletransferase (249 aa).

The next 6 membrane-spanning stretches (helical) occupy residues 32-52, 53-73, 107-127, 136-156, 190-210, and 224-244; these read MVAF…TWFG, ATWL…WGAI, IGTM…LFVL, ALIV…FWFP, LLWW…IIIA, and TYGA…AALV.

It belongs to the CobS family. Mg(2+) serves as cofactor.

It localises to the cell membrane. The enzyme catalyses alpha-ribazole + adenosylcob(III)inamide-GDP = adenosylcob(III)alamin + GMP + H(+). It carries out the reaction alpha-ribazole 5'-phosphate + adenosylcob(III)inamide-GDP = adenosylcob(III)alamin 5'-phosphate + GMP + H(+). It participates in cofactor biosynthesis; adenosylcobalamin biosynthesis; adenosylcobalamin from cob(II)yrinate a,c-diamide: step 7/7. Joins adenosylcobinamide-GDP and alpha-ribazole to generate adenosylcobalamin (Ado-cobalamin). Also synthesizes adenosylcobalamin 5'-phosphate from adenosylcobinamide-GDP and alpha-ribazole 5'-phosphate. This chain is Adenosylcobinamide-GDP ribazoletransferase, found in Herpetosiphon aurantiacus (strain ATCC 23779 / DSM 785 / 114-95).